We begin with the raw amino-acid sequence, 281 residues long: Putative phosphoenolpyruvate synthase regulatory protein (281 aa).

161 to 168 (GVSRSGKT) contributes to the ADP binding site.

This sequence belongs to the pyruvate, phosphate/water dikinase regulatory protein family. PSRP subfamily.

It catalyses the reaction [pyruvate, water dikinase] + ADP = [pyruvate, water dikinase]-phosphate + AMP + H(+). The enzyme catalyses [pyruvate, water dikinase]-phosphate + phosphate + H(+) = [pyruvate, water dikinase] + diphosphate. Its function is as follows. Bifunctional serine/threonine kinase and phosphorylase involved in the regulation of the phosphoenolpyruvate synthase (PEPS) by catalyzing its phosphorylation/dephosphorylation. This Herminiimonas arsenicoxydans protein is Putative phosphoenolpyruvate synthase regulatory protein.